A 72-amino-acid chain; its full sequence is Delta-actitoxin-Avd2b 1 (72 aa).

The signal sequence occupies residues 1–21; it reads MMNRLLVFLMLGAAFMLVVSA. Positions 22 to 42 are excised as a propeptide; it reads NDAYGDEPAFKDLNQGDESLG. 3 cysteine pairs are disulfide-bonded: Cys47-Cys62, Cys48-Cys56, and Cys50-Cys67.

This sequence belongs to the sea anemone short toxin (type III) family.

It localises to the secreted. The protein localises to the nematocyst. Functionally, voltage-gated sodium channel (Nav) inhibitor. 1 uM completely inhibits insect voltage-gated sodium channel inactivation (DmNav1 from D.melanogaster). This Anemonia viridis (Snakelocks anemone) protein is Delta-actitoxin-Avd2b 1.